The chain runs to 214 residues: MQITVSNLKKSYGGSTVLDVESLTFESGKITGIIGPNGAGKTTLLNIISGIDMDFEGDVEYSGSDYSEVKRDITMVFQKGGLLKRSVFENIAYPLKLRGTDKNEIQQTVVELMRHLGIEELSSKKAHKLSGGETQRVALARALAIKPRALLLDEPTASIDPEYMETIEKCIVDYNRKSKATILIITHSMDQARRLCDNIVFLESGRVGEADGFF.

One can recognise an ABC transporter domain in the interval 3–214 (ITVSNLKKSY…GRVGEADGFF (212 aa)). 35-42 (GPNGAGKT) contacts ATP.

Belongs to the ABC transporter superfamily. In terms of assembly, the complex is composed of two ATP-binding proteins (TupC), two transmembrane proteins (TupB) and a solute-binding protein (TupA).

The catalysed reaction is tungstate(in) + ATP + H2O = tungstate(out) + ADP + phosphate + H(+). Functionally, part of an ABC transporter complex involved in tungstate uptake. Probably responsible for energy coupling to the transport system. The chain is Tungstate uptake system ATP-binding protein TupC from Peptoclostridium acidaminophilum (Eubacterium acidaminophilum).